The chain runs to 432 residues: D-amino acid dehydrogenase (432 aa).

FAD is bound at residue 3 to 17 (VVILGSGVVGVTSAW).

The protein belongs to the DadA oxidoreductase family. The cofactor is FAD.

It carries out the reaction a D-alpha-amino acid + A + H2O = a 2-oxocarboxylate + AH2 + NH4(+). It participates in amino-acid degradation; D-alanine degradation; NH(3) and pyruvate from D-alanine: step 1/1. Its function is as follows. Oxidative deamination of D-amino acids. This chain is D-amino acid dehydrogenase, found in Citrobacter koseri (strain ATCC BAA-895 / CDC 4225-83 / SGSC4696).